The primary structure comprises 627 residues: Chaperone protein DnaK (627 aa).

Thr-197 carries the post-translational modification Phosphothreonine; by autocatalysis. The span at 596–615 (MYAQGGDQGQQAAPQQEQSG) shows a compositional bias: low complexity. The interval 596–627 (MYAQGGDQGQQAAPQQEQSGDNVEDVEFEEVK) is disordered. The span at 617-627 (NVEDVEFEEVK) shows a compositional bias: acidic residues.

This sequence belongs to the heat shock protein 70 family.

Functionally, acts as a chaperone. The chain is Chaperone protein DnaK from Flavobacterium johnsoniae (strain ATCC 17061 / DSM 2064 / JCM 8514 / BCRC 14874 / CCUG 350202 / NBRC 14942 / NCIMB 11054 / UW101) (Cytophaga johnsonae).